Consider the following 745-residue polypeptide: Elongation factor G, mitochondrial (745 aa).

One can recognise a tr-type G domain in the interval 40–317 (ERIRNIGISA…AVLDYLPNPG (278 aa)). Residues 49 to 56 (AHIDSGKT), 116 to 120 (DTPGH), and 170 to 173 (NKLD) each bind GTP.

The protein belongs to the TRAFAC class translation factor GTPase superfamily. Classic translation factor GTPase family. EF-G/EF-2 subfamily.

It localises to the mitochondrion. It participates in protein biosynthesis; polypeptide chain elongation. Its function is as follows. Mitochondrial GTPase that catalyzes the GTP-dependent ribosomal translocation step during translation elongation. During this step, the ribosome changes from the pre-translocational (PRE) to the post-translocational (POST) state as the newly formed A-site-bound peptidyl-tRNA and P-site-bound deacylated tRNA move to the P and E sites, respectively. Catalyzes the coordinated movement of the two tRNA molecules, the mRNA and conformational changes in the ribosome. Essential during development as it acts as a retrograde signal from mitochondria to the nucleus to slow down cell proliferation if mitochondrial energy output is low. The chain is Elongation factor G, mitochondrial from Drosophila erecta (Fruit fly).